Here is a 323-residue protein sequence, read N- to C-terminus: L-lactate dehydrogenase (323 aa).

Positions 12, 33, and 65 each coordinate NAD(+). Substrate is bound by residues R94 and 126–129 (NPCD). T149 provides a ligand contact to NAD(+). 154-157 (ETMR) serves as a coordination point for substrate. The Proton acceptor role is filled by H181. Position 234 (T234) interacts with substrate.

It belongs to the LDH/MDH superfamily. LDH family. In terms of assembly, homotetramer.

The protein localises to the cytoplasm. The catalysed reaction is (S)-lactate + NAD(+) = pyruvate + NADH + H(+). It participates in fermentation; pyruvate fermentation to lactate; (S)-lactate from pyruvate: step 1/1. In terms of biological role, catalyzes the conversion of lactate to pyruvate. In Mycoplasmoides gallisepticum (strain R(low / passage 15 / clone 2)) (Mycoplasma gallisepticum), this protein is L-lactate dehydrogenase.